The sequence spans 636 residues: Protein BCAP (636 aa).

Coiled-coil stretches lie at residues 36 to 97 (LSCL…EQKE), 141 to 220 (ESEN…WNLQ), 249 to 325 (YKQR…HGKN), 377 to 484 (ISSE…ECQE), and 519 to 631 (LEEE…KMNS).

Belongs to the ODF2 family. As to expression, mainly expressed in trachea and testis. Not detected in bone marrow, bladder, leukocytes. Only weakly detected in tongue, stomach, brain and ovaries.

The protein resides in the cytoplasm. The protein localises to the cytoskeleton. Its subcellular location is the microtubule organizing center. It localises to the centrosome. It is found in the centriole. The protein resides in the centriolar satellite. The protein localises to the cilium basal body. Its function is as follows. Acts as a suppressor of ciliogenesis, specifically, the initiation of ciliogenesis. The chain is Protein BCAP from Homo sapiens (Human).